The sequence spans 152 residues: Lipoprotein signal peptidase (152 aa).

The next 2 membrane-spanning stretches (helical) occupy residues 55-75 (NKMW…VFYM) and 85-105 (LGIS…DRVF). Residues D111 and D129 contribute to the active site. A helical transmembrane segment spans residues 124 to 144 (VFNIADSALCIGVVLIIIQTL).

It belongs to the peptidase A8 family.

It is found in the cell membrane. The catalysed reaction is Release of signal peptides from bacterial membrane prolipoproteins. Hydrolyzes -Xaa-Yaa-Zaa-|-(S,diacylglyceryl)Cys-, in which Xaa is hydrophobic (preferably Leu), and Yaa (Ala or Ser) and Zaa (Gly or Ala) have small, neutral side chains.. It participates in protein modification; lipoprotein biosynthesis (signal peptide cleavage). This protein specifically catalyzes the removal of signal peptides from prolipoproteins. This Bacillus cereus (strain B4264) protein is Lipoprotein signal peptidase.